Reading from the N-terminus, the 120-residue chain is Small ribosomal subunit protein uS11 (120 aa).

This sequence belongs to the universal ribosomal protein uS11 family. In terms of assembly, part of the 30S ribosomal subunit. Interacts with proteins S7 and S18. Binds to IF-3.

Functionally, located on the platform of the 30S subunit, it bridges several disparate RNA helices of the 16S rRNA. Forms part of the Shine-Dalgarno cleft in the 70S ribosome. The chain is Small ribosomal subunit protein uS11 from Neorickettsia sennetsu (strain ATCC VR-367 / Miyayama) (Ehrlichia sennetsu).